A 542-amino-acid polypeptide reads, in one-letter code: Multidrug transporter DTR1 (542 aa).

Residues N6 and N46 are each glycosylated (N-linked (GlcNAc...) asparagine). Residues 80–100 (LIFLIVIYNGFLGPLAGNVFI) form a helical membrane-spanning segment. N-linked (GlcNAc...) asparagine glycosylation is found at N111 and N118. 5 helical membrane-spanning segments follow: residues 119-139 (ATVS…GALA), 146-166 (ILYI…ASVP), 169-189 (IGSL…VISL), 210-230 (FMLG…LILL), and 237-257 (WLFG…ILLL). N274 carries an N-linked (GlcNAc...) asparagine glycan. 4 helical membrane-spanning segments follow: residues 332-352 (IMTF…FCTY), 374-394 (IGAC…IGGH), 419-439 (ILTV…GWCI), and 441-461 (FHYH…GLTW). N-linked (GlcNAc...) asparagine glycosylation occurs at N463. 2 helical membrane-spanning segments follow: residues 481-501 (AIAV…ALIA) and 511-531 (FCFL…LVLI).

This sequence belongs to the major facilitator superfamily. CAR1 family.

It is found in the cell membrane. Plasma membrane acetic acid exporter, relieving the stress induced upon cells within hemocytes, and thus enabling increased proliferation and virulence against Galleria mellonella larvae. Confers resistance to weak acid and oxidative stress, but not to antifungal drugs. The protein is Multidrug transporter DTR1 of Candida glabrata (strain ATCC 2001 / BCRC 20586 / JCM 3761 / NBRC 0622 / NRRL Y-65 / CBS 138) (Yeast).